A 1026-amino-acid chain; its full sequence is Multidrug resistance protein MdtC (1026 aa).

Helical transmembrane passes span Val12 to Leu32, Glu333 to Leu353, Ala360 to Cys380, Leu387 to Leu407, Val431 to Leu451, Phe463 to Pro483, Trp528 to Pro548, Leu853 to Ser873, Val875 to Leu895, Trp897 to Val917, Pro953 to Gly973, and Ile984 to Val1004.

The protein belongs to the resistance-nodulation-cell division (RND) (TC 2.A.6) family. MdtC subfamily. Part of a tripartite efflux system composed of MdtA, MdtB and MdtC. MdtC forms a heteromultimer with MdtB.

It is found in the cell inner membrane. The protein is Multidrug resistance protein MdtC of Pectobacterium carotovorum subsp. carotovorum (strain PC1).